Here is a 542-residue protein sequence, read N- to C-terminus: CTP synthase (542 aa).

The tract at residues 1-265 is amidoligase domain; sequence MTRFIFITGG…DTQVLKFFGM (265 aa). Residue Ser-13 participates in CTP binding. Ser-13 contributes to the UTP binding site. 14 to 19 contacts ATP; sequence SLGKGL. Tyr-54 contributes to the L-glutamine binding site. Asp-71 is a binding site for ATP. Residues Asp-71 and Glu-139 each coordinate Mg(2+). CTP is bound by residues 146–148, 186–191, and Lys-222; these read DIE and KTKPTQ. UTP-binding positions include 186 to 191 and Lys-222; that span reads KTKPTQ. Residues 291–541 form the Glutamine amidotransferase type-1 domain; that stretch reads TIAVVGKYTS…IRAAIEQSRL (251 aa). Gly-353 contacts L-glutamine. Cys-380 functions as the Nucleophile; for glutamine hydrolysis in the catalytic mechanism. L-glutamine-binding positions include 381-384, Glu-404, and Arg-469; that span reads FGMQ. Residues His-514 and Glu-516 contribute to the active site.

It belongs to the CTP synthase family. Homotetramer.

The catalysed reaction is UTP + L-glutamine + ATP + H2O = CTP + L-glutamate + ADP + phosphate + 2 H(+). It carries out the reaction L-glutamine + H2O = L-glutamate + NH4(+). The enzyme catalyses UTP + NH4(+) + ATP = CTP + ADP + phosphate + 2 H(+). Its pathway is pyrimidine metabolism; CTP biosynthesis via de novo pathway; CTP from UDP: step 2/2. Its activity is regulated as follows. Allosterically activated by GTP, when glutamine is the substrate; GTP has no effect on the reaction when ammonia is the substrate. The allosteric effector GTP functions by stabilizing the protein conformation that binds the tetrahedral intermediate(s) formed during glutamine hydrolysis. Inhibited by the product CTP, via allosteric rather than competitive inhibition. In terms of biological role, catalyzes the ATP-dependent amination of UTP to CTP with either L-glutamine or ammonia as the source of nitrogen. Regulates intracellular CTP levels through interactions with the four ribonucleotide triphosphates. This Rhodospirillum centenum (strain ATCC 51521 / SW) protein is CTP synthase.